The sequence spans 88 residues: Small ribosomal subunit protein eS21 (88 aa).

It belongs to the eukaryotic ribosomal protein eS21 family. As to quaternary structure, component of the 40S small ribosomal subunit.

The protein resides in the cytoplasm. It localises to the cytosol. It is found in the rough endoplasmic reticulum. The protein is Small ribosomal subunit protein eS21 (rps-21) of Caenorhabditis elegans.